The chain runs to 198 residues: ATP-dependent Clp protease proteolytic subunit (198 aa).

The active-site Nucleophile is the Ser-98. Residue His-123 is part of the active site.

Belongs to the peptidase S14 family. Fourteen ClpP subunits assemble into 2 heptameric rings which stack back to back to give a disk-like structure with a central cavity, resembling the structure of eukaryotic proteasomes.

The protein resides in the cytoplasm. The catalysed reaction is Hydrolysis of proteins to small peptides in the presence of ATP and magnesium. alpha-casein is the usual test substrate. In the absence of ATP, only oligopeptides shorter than five residues are hydrolyzed (such as succinyl-Leu-Tyr-|-NHMec, and Leu-Tyr-Leu-|-Tyr-Trp, in which cleavage of the -Tyr-|-Leu- and -Tyr-|-Trp bonds also occurs).. Its function is as follows. Cleaves peptides in various proteins in a process that requires ATP hydrolysis. Has a chymotrypsin-like activity. Plays a major role in the degradation of misfolded proteins. The sequence is that of ATP-dependent Clp protease proteolytic subunit from Ehrlichia ruminantium (strain Welgevonden).